The following is a 72-amino-acid chain: Translation initiation factor IF-1 (72 aa).

The S1-like domain occupies 1 to 72; sequence MARDDVIEVD…DRGRITFRYK (72 aa).

This sequence belongs to the IF-1 family. As to quaternary structure, component of the 30S ribosomal translation pre-initiation complex which assembles on the 30S ribosome in the order IF-2 and IF-3, IF-1 and N-formylmethionyl-tRNA(fMet); mRNA recruitment can occur at any time during PIC assembly.

The protein localises to the cytoplasm. One of the essential components for the initiation of protein synthesis. Stabilizes the binding of IF-2 and IF-3 on the 30S subunit to which N-formylmethionyl-tRNA(fMet) subsequently binds. Helps modulate mRNA selection, yielding the 30S pre-initiation complex (PIC). Upon addition of the 50S ribosomal subunit IF-1, IF-2 and IF-3 are released leaving the mature 70S translation initiation complex. This Helicobacter acinonychis (strain Sheeba) protein is Translation initiation factor IF-1.